The sequence spans 314 residues: Secreted frizzled-related protein 1 (314 aa).

Residues 1–31 (MGIGRSEGGRRGAALGVLLALGAALLAVGSA) form the signal peptide. Residues 53 to 169 (TKPPQCVDIP…FPEGDVCIAM (117 aa)) form the FZ domain. Intrachain disulfides connect C58–C121, C68–C114, C105–C140, C129–C166, and C133–C157. N173 carries N-linked (GlcNAc...) asparagine glycosylation. Intrachain disulfides connect C186/C256, C189/C258, and C203/C306. One can recognise an NTR domain in the interval 186–306 (CPPCDNELKS…FMKKMKNHEC (121 aa)).

The protein belongs to the secreted frizzled-related protein (sFRP) family. Interacts with WNT1, WNT2 and FRZD6. Interacts with WNT4, WNT8 and MYOC. Widely expressed. Absent from lung, liver and peripheral blood leukocytes. Highest levels in heart and fetal kidney. Also expressed in testis, ovary, fetal brain and lung, leiomyomal cells, myometrial cells and vascular smooth muscle cells. Expressed in foreskin fibroblasts and in keratinocytes.

It is found in the secreted. Soluble frizzled-related proteins (sFRPS) function as modulators of Wnt signaling through direct interaction with Wnts. They have a role in regulating cell growth and differentiation in specific cell types. SFRP1 decreases intracellular beta-catenin levels. Has antiproliferative effects on vascular cells, in vitro and in vivo, and can induce, in vivo, an angiogenic response. In vascular cell cycle, delays the G1 phase and entry into the S phase. In kidney development, inhibits tubule formation and bud growth in metanephroi. Inhibits WNT1/WNT4-mediated TCF-dependent transcription. This chain is Secreted frizzled-related protein 1 (SFRP1), found in Homo sapiens (Human).